Reading from the N-terminus, the 605-residue chain is Kelch-like protein 26 (605 aa).

The BTB domain occupies 53–120 (LDVVLAIDNE…AYSSEVTLDL (68 aa)). A BACK domain is found at 155 to 256 (CLNIGQMATT…RSSELVDSVQ (102 aa)). Kelch repeat units follow at residues 300–351 (SLIT…VLDN), 352–403 (FVYV…VLDG), 404–450 (QLYA…TCGD), 452–498 (LYIS…SANN), 499–549 (RIYA…LLDK), and 551–598 (IYIV…PIIL).

Functionally, may play a role in endo(sarco)plasmic reticulum (ER/SR) mitochondrial signaling. May be part of the ubiquitin-proteasome system (UPS) and affect ubiquitination and degradation of target substrates. The chain is Kelch-like protein 26 (klhl26) from Danio rerio (Zebrafish).